A 445-amino-acid polypeptide reads, in one-letter code: Tyrosine--tRNA ligase, mitochondrial (445 aa).

An L-tyrosine-binding site is contributed by Tyr33. Asp37 is a binding site for ATP. The 'HIGH' region motif lies at 38-47 (PTAASLHVGN). The L-tyrosine site is built by Asp77, Tyr184, Gln188, Asp191, and Gln210. Residues 245-249 (KLGKS) carry the 'KMSKS' region motif. Lys248 provides a ligand contact to ATP. Residues 384 to 445 (QPFSRLLRTL…GKRTFVLDSL (62 aa)) form the S4 RNA-binding domain.

The protein belongs to the class-I aminoacyl-tRNA synthetase family. Homodimer.

The protein resides in the mitochondrion matrix. The enzyme catalyses tRNA(Tyr) + L-tyrosine + ATP = L-tyrosyl-tRNA(Tyr) + AMP + diphosphate + H(+). Functionally, catalyzes the attachment of tyrosine to tRNA(Tyr) in a two-step reaction: tyrosine is first activated by ATP to form Tyr-AMP and then transferred to the acceptor end of tRNA(Tyr). In Schizosaccharomyces pombe (strain 972 / ATCC 24843) (Fission yeast), this protein is Tyrosine--tRNA ligase, mitochondrial.